The sequence spans 308 residues: D-alanine--D-alanine ligase (308 aa).

Residues Lys-103–Glu-302 enclose the ATP-grasp domain. An ATP-binding site is contributed by Met-130–Thr-184. Mg(2+) contacts are provided by Asp-252, Glu-269, and Asn-271.

Belongs to the D-alanine--D-alanine ligase family. Requires Mg(2+) as cofactor. Mn(2+) serves as cofactor.

The protein resides in the cytoplasm. It carries out the reaction 2 D-alanine + ATP = D-alanyl-D-alanine + ADP + phosphate + H(+). It participates in cell wall biogenesis; peptidoglycan biosynthesis. Functionally, cell wall formation. The polypeptide is D-alanine--D-alanine ligase (Afipia carboxidovorans (strain ATCC 49405 / DSM 1227 / KCTC 32145 / OM5) (Oligotropha carboxidovorans)).